Consider the following 432-residue polypeptide: Carbohydrate esterase MZ0003 (432 aa).

Residues 1 to 25 form the signal peptide; that stretch reads MQRTCVLIVLIVTSTMWTPDPDVYA. A GXSYXG catalytic site motif motif is present at residues 266 to 271; that stretch reads GHSRLG. Ser268 functions as the Nucleophile in the catalytic mechanism. Residues Lys272 and Trp359 each coordinate substrate. Residue His409 is the Charge relay system of the active site.

Belongs to the carbohydrate esterase 15 (CE15) family. The cofactor is Does not require metal ions for activity..

The protein resides in the periplasm. With respect to regulation, is inhibited by PMSF and by NaF in vitro, which is consistent with the catalytic nucleophile being a serine. Displays some glucuronoyl esterase activity in vitro, since it is able to hydrolyze methyl 4-O-methyl-D-glucopyranosyluronate, allyl D-glucuronate, benzyl D-glucuronate and D-glucuronic acid methyl ester. However, esters of glucuronic acid are probably not its biological substrate, as they are not present in the marine environment. Can also hydrolyze a range of other esters, including p-nitrophenyl acetate. More likely biologically-relevant substrates for MZ0003 and other marine bacterial CE15s are algal cell wall polysaccharides, as these would be readily available in this environment and could be used as energy sources. This Unknown prokaryotic organism protein is Carbohydrate esterase MZ0003.